Here is a 77-residue protein sequence, read N- to C-terminus: Acyl carrier protein (77 aa).

One can recognise a Carrier domain in the interval 2–77; sequence ADVLERVTKI…DAVTYIESHL (76 aa). An O-(pantetheine 4'-phosphoryl)serine modification is found at Ser37.

The protein belongs to the acyl carrier protein (ACP) family. Post-translationally, 4'-phosphopantetheine is transferred from CoA to a specific serine of apo-ACP by AcpS. This modification is essential for activity because fatty acids are bound in thioester linkage to the sulfhydryl of the prosthetic group.

It localises to the cytoplasm. It functions in the pathway lipid metabolism; fatty acid biosynthesis. Carrier of the growing fatty acid chain in fatty acid biosynthesis. The chain is Acyl carrier protein from Bacillus mycoides (strain KBAB4) (Bacillus weihenstephanensis).